The primary structure comprises 453 residues: Bis(5'-adenosyl)-triphosphatase ENPP4 (453 aa).

Residues 1–15 form the signal peptide; sequence MKLLVILLFSGLITG. The Extracellular segment spans residues 16–407; sequence FRSDSSSSLP…DQWCINLPEA (392 aa). 2 residues coordinate Zn(2+): aspartate 34 and threonine 70. Threonine 70 (AMP-threonine intermediate) is an active-site residue. Residues asparagine 91 and tyrosine 154 each coordinate substrate. N-linked (GlcNAc...) asparagine glycans are attached at residues asparagine 155 and asparagine 166. The Zn(2+) site is built by aspartate 189, histidine 193, aspartate 237, and histidine 238. Aspartate 189 contributes to the substrate binding site. Residues cysteine 254 and cysteine 287 are joined by a disulfide bond. The N-linked (GlcNAc...) asparagine glycan is linked to asparagine 276. Position 336 (histidine 336) interacts with Zn(2+). Asparagine 386 carries N-linked (GlcNAc...) asparagine glycosylation. A disulfide bridge connects residues cysteine 394 and cysteine 401. A helical membrane pass occupies residues 408-428; sequence IAIVIGSLLVLTMLTCLIIIM. Topologically, residues 429-453 are cytoplasmic; it reads QNRLSVPRPFSRLQLQEDDDDPLIG.

The protein belongs to the nucleotide pyrophosphatase/phosphodiesterase family. Zn(2+) serves as cofactor. As to expression, expressed on the surface of vascular endothelia.

The protein localises to the cell membrane. The catalysed reaction is P(1),P(3)-bis(5'-adenosyl) triphosphate + H2O = AMP + ADP + 2 H(+). In terms of biological role, hydrolyzes extracellular Ap3A into AMP and ADP, and Ap4A into AMP and ATP. Ap3A and Ap4A are diadenosine polyphosphates thought to induce proliferation of vascular smooth muscle cells. Acts as a procoagulant, mediating platelet aggregation at the site of nascent thrombus via release of ADP from Ap3A and activation of ADP receptors. The chain is Bis(5'-adenosyl)-triphosphatase ENPP4 (ENPP4) from Homo sapiens (Human).